The following is a 226-amino-acid chain: Thymocyte nuclear protein 1 (226 aa).

Positions 1 to 38 (MPRPRKRQAGAAGPDKKQLSGKRTKTENSESASVKLEN) are disordered. The Nuclear localization signal signature appears at 5-10 (RKRQAG). Over residues 14–28 (PDKKQLSGKRTKTEN) the composition is skewed to basic and acidic residues. The segment covering 29–38 (SESASVKLEN) has biased composition (polar residues).

Post-translationally, phosphorylated.

The protein resides in the nucleus. Its function is as follows. Specifically binds 5-hydroxymethylcytosine (5hmC), suggesting that it acts as a specific reader of 5hmC. The protein is Thymocyte nuclear protein 1 (Thyn1) of Rattus norvegicus (Rat).